Consider the following 82-residue polypeptide: RNA-binding protein GTNG_0100 (82 aa).

The protein belongs to the eukaryotic ribosomal protein eL8 family.

The sequence is that of RNA-binding protein GTNG_0100 from Geobacillus thermodenitrificans (strain NG80-2).